The primary structure comprises 181 residues: Malignant T-cell-amplified sequence 2 (181 aa).

Residues 92-171 form the PUA domain; the sequence is LPHQQVDKGA…IGIENIHYLN (80 aa).

The protein belongs to the MCTS1 family.

The protein localises to the cytoplasm. This Mus musculus (Mouse) protein is Malignant T-cell-amplified sequence 2.